The following is a 721-amino-acid chain: Exocyst complex component 3-like protein 4 (721 aa).

2 disordered regions span residues 1 to 52 (MPLP…SLGM) and 94 to 135 (GLTA…QAES). A compositionally biased stretch (polar residues) spans 22-37 (SQTLPVTTWKSNSMKE). Ser515 is subject to Phosphoserine.

This sequence belongs to the SEC6 family.

The protein is Exocyst complex component 3-like protein 4 (Exoc3l4) of Mus musculus (Mouse).